Consider the following 198-residue polypeptide: Small ribosomal subunit protein uS4c (198 aa).

The region spanning 85–145 (LRLDATIFRL…PKKFTIILIC (61 aa)) is the S4 RNA-binding domain.

This sequence belongs to the universal ribosomal protein uS4 family. In terms of assembly, part of the 30S ribosomal subunit.

It localises to the plastid. Its subcellular location is the apicoplast. One of the primary rRNA binding proteins, it binds directly to 16S rRNA where it nucleates assembly of the body of the 30S subunit. The protein is Small ribosomal subunit protein uS4c (rps4) of Toxoplasma gondii.